Reading from the N-terminus, the 168-residue chain is Crossover junction endodeoxyribonuclease RuvC (168 aa).

Active-site residues include Asp8, Glu68, and Asp140. The Mg(2+) site is built by Asp8, Glu68, and Asp140.

This sequence belongs to the RuvC family. As to quaternary structure, homodimer which binds Holliday junction (HJ) DNA. The HJ becomes 2-fold symmetrical on binding to RuvC with unstacked arms; it has a different conformation from HJ DNA in complex with RuvA. In the full resolvosome a probable DNA-RuvA(4)-RuvB(12)-RuvC(2) complex forms which resolves the HJ. The cofactor is Mg(2+).

It localises to the cytoplasm. It catalyses the reaction Endonucleolytic cleavage at a junction such as a reciprocal single-stranded crossover between two homologous DNA duplexes (Holliday junction).. Functionally, the RuvA-RuvB-RuvC complex processes Holliday junction (HJ) DNA during genetic recombination and DNA repair. Endonuclease that resolves HJ intermediates. Cleaves cruciform DNA by making single-stranded nicks across the HJ at symmetrical positions within the homologous arms, yielding a 5'-phosphate and a 3'-hydroxyl group; requires a central core of homology in the junction. The consensus cleavage sequence is 5'-(A/T)TT(C/G)-3'. Cleavage occurs on the 3'-side of the TT dinucleotide at the point of strand exchange. HJ branch migration catalyzed by RuvA-RuvB allows RuvC to scan DNA until it finds its consensus sequence, where it cleaves and resolves the cruciform DNA. The polypeptide is Crossover junction endodeoxyribonuclease RuvC (Gluconobacter oxydans (strain 621H) (Gluconobacter suboxydans)).